The following is a 314-amino-acid chain: Tyrosine recombinase XerC (314 aa).

The region spanning 1 to 85 (MNEQVEAFLR…AVKSFFTFLT (85 aa)) is the Core-binding (CB) domain. Positions 106–291 (DLPRALTPRQ…NHESSHTPHA (186 aa)) constitute a Tyr recombinase domain. Active-site residues include R147, K171, H243, R246, and H269. The O-(3'-phospho-DNA)-tyrosine intermediate role is filled by Y278. The tract at residues 284-314 (ESSHTPHAHPAPRASEVNGVRDEQALVPEEK) is disordered. The span at 302–314 (GVRDEQALVPEEK) shows a compositional bias: basic and acidic residues.

This sequence belongs to the 'phage' integrase family. XerC subfamily. As to quaternary structure, forms a cyclic heterotetrameric complex composed of two molecules of XerC and two molecules of XerD.

The protein resides in the cytoplasm. In terms of biological role, site-specific tyrosine recombinase, which acts by catalyzing the cutting and rejoining of the recombining DNA molecules. The XerC-XerD complex is essential to convert dimers of the bacterial chromosome into monomers to permit their segregation at cell division. It also contributes to the segregational stability of plasmids. The polypeptide is Tyrosine recombinase XerC (Roseiflexus castenholzii (strain DSM 13941 / HLO8)).